The following is a 354-amino-acid chain: Photosystem II protein D1 2 (354 aa).

Helical transmembrane passes span 29 to 46 (YIGW…TATT), 118 to 133 (HFLI…EWEL), and 142 to 156 (WIAV…AATA). Position 118 (histidine 118) interacts with chlorophyll a. Residue tyrosine 126 participates in pheophytin a binding. 2 residues coordinate [CaMn4O5] cluster: aspartate 170 and glutamate 189. The chain crosses the membrane as a helical span at residues 197–218 (FHQLGVAGVFGGALFSAMHGSL). Histidine 198 serves as a coordination point for chlorophyll a. A quinone is bound by residues histidine 215 and 264 to 265 (SF). Histidine 215 contacts Fe cation. Position 272 (histidine 272) interacts with Fe cation. A helical membrane pass occupies residues 274–288 (FLAAWPVIGIWFTAL). [CaMn4O5] cluster contacts are provided by histidine 332, glutamate 333, aspartate 342, and alanine 344. The propeptide occupies 345–354 (AVEVAPAVRG).

Belongs to the reaction center PufL/M/PsbA/D family. As to quaternary structure, PSII is composed of 1 copy each of membrane proteins PsbA, PsbB, PsbC, PsbD, PsbE, PsbF, PsbH, PsbI, PsbJ, PsbK, PsbL, PsbM, PsbT, PsbX, PsbY, PsbZ, Psb30/Ycf12, peripheral proteins PsbO, CyanoQ (PsbQ), PsbU, PsbV and a large number of cofactors. It forms dimeric complexes. It depends on The D1/D2 heterodimer binds P680, chlorophylls that are the primary electron donor of PSII, and subsequent electron acceptors. It shares a non-heme iron and each subunit binds pheophytin, quinone, additional chlorophylls, carotenoids and lipids. D1 provides most of the ligands for the Mn4-Ca-O5 cluster of the oxygen-evolving complex (OEC). There is also a Cl(-1) ion associated with D1 and D2, which is required for oxygen evolution. The PSII complex binds additional chlorophylls, carotenoids and specific lipids. as a cofactor. Tyr-161 forms a radical intermediate that is referred to as redox-active TyrZ, YZ or Y-Z. Post-translationally, C-terminally processed by CtpA; processing is essential to allow assembly of the oxygen-evolving complex and thus photosynthetic growth.

The protein resides in the cellular thylakoid membrane. The catalysed reaction is 2 a plastoquinone + 4 hnu + 2 H2O = 2 a plastoquinol + O2. In terms of biological role, photosystem II (PSII) is a light-driven water:plastoquinone oxidoreductase that uses light energy to abstract electrons from H(2)O, generating O(2) and a proton gradient subsequently used for ATP formation. It consists of a core antenna complex that captures photons, and an electron transfer chain that converts photonic excitation into a charge separation. The D1/D2 (PsbA/PsbD) reaction center heterodimer binds P680, the primary electron donor of PSII as well as several subsequent electron acceptors. This chain is Photosystem II protein D1 2, found in Synechococcus sp. (strain JA-2-3B'a(2-13)) (Cyanobacteria bacterium Yellowstone B-Prime).